Consider the following 681-residue polypeptide: Phenylalanine--tRNA ligase beta subunit (681 aa).

One can recognise a B5 domain in the interval 288 to 363 (PARETVLLRP…RIHGYDQIPE (76 aa)). Residues Asp341, Asp347, Glu350, and Glu351 each coordinate Mg(2+). Residues 586-681 (SSFPSIQRDL…EKQLEAVLLR (96 aa)) enclose the FDX-ACB domain.

The protein belongs to the phenylalanyl-tRNA synthetase beta subunit family. Type 1 subfamily. Tetramer of two alpha and two beta subunits. Mg(2+) is required as a cofactor.

The protein resides in the cytoplasm. It catalyses the reaction tRNA(Phe) + L-phenylalanine + ATP = L-phenylalanyl-tRNA(Phe) + AMP + diphosphate + H(+). The sequence is that of Phenylalanine--tRNA ligase beta subunit from Rhodopirellula baltica (strain DSM 10527 / NCIMB 13988 / SH1).